A 523-amino-acid polypeptide reads, in one-letter code: Probable FAD synthase (523 aa).

The molybdenum cofactor biosynthesis protein-like stretch occupies residues 20-111 (AIVVIGDEIL…TDQLHFSDEI (92 aa)). Residues 332–489 (QIALSFNGGK…SLGGRDNTVK (158 aa)) form an FAD synthase region.

This sequence in the N-terminal section; belongs to the MoaB/Mog family. The protein in the C-terminal section; belongs to the PAPS reductase family. FAD1 subfamily. Mg(2+) serves as cofactor.

It carries out the reaction FMN + ATP + H(+) = FAD + diphosphate. The protein operates within cofactor biosynthesis; FAD biosynthesis; FAD from FMN: step 1/1. Functionally, catalyzes the adenylation of flavin mononucleotide (FMN) to form flavin adenine dinucleotide (FAD) coenzyme. This chain is Probable FAD synthase, found in Caenorhabditis briggsae.